Here is a 314-residue protein sequence, read N- to C-terminus: MVKKNFIPSVSLVRRDLPTLVTTTTSSTALSKPTSSVVSETSSKSLPSLTSSAFSTSSGATSSSSLIVASITPPSTAGNPFILNAADKPNGTVYIAVGAVIGAIFISILIWWLVSSYLSRRFTMTNSYANDSKNLYRGHHKHSSSLQSNPFDINDEKSYMQDDWDSMSQLESSQYEDAASPFNPIQDPFTDNRRSLFISPTLQVSQYEKSHSRHQSKDTNIFIDDPSLYVGTYLEEEEEEERKLNLNRPQRAASPERKEKKINSMEGYHKRNQSSLGLIPVASATSNTSSPKKAHKRQAPSMFLDDVLNGREII.

The disordered stretch occupies residues Lys32–Ala60. The helical transmembrane segment at Val93–Leu113 threads the bilayer. Phosphoserine is present on residues Ser148, Ser254, and Ser274. A disordered region spans residues Glu240 to Asn309. The span at Ser254–His269 shows a compositional bias: basic and acidic residues.

The protein belongs to the PRM5 family.

Its subcellular location is the vacuole membrane. The chain is Vacuolar membrane protein SCRG_03194 from Saccharomyces cerevisiae (strain RM11-1a) (Baker's yeast).